A 124-amino-acid chain; its full sequence is Small ribosomal subunit protein uS12 (124 aa).

Position 89 is a 3-methylthioaspartic acid (Asp89).

This sequence belongs to the universal ribosomal protein uS12 family. As to quaternary structure, part of the 30S ribosomal subunit. Contacts proteins S8 and S17. May interact with IF1 in the 30S initiation complex.

With S4 and S5 plays an important role in translational accuracy. Functionally, interacts with and stabilizes bases of the 16S rRNA that are involved in tRNA selection in the A site and with the mRNA backbone. Located at the interface of the 30S and 50S subunits, it traverses the body of the 30S subunit contacting proteins on the other side and probably holding the rRNA structure together. The combined cluster of proteins S8, S12 and S17 appears to hold together the shoulder and platform of the 30S subunit. The chain is Small ribosomal subunit protein uS12 from Vibrio atlanticus (strain LGP32) (Vibrio splendidus (strain Mel32)).